The sequence spans 237 residues: Demethylmenaquinone methyltransferase (237 aa).

Residues Thr58, Asp79, and 106 to 107 each bind S-adenosyl-L-methionine; that span reads NA.

The protein belongs to the class I-like SAM-binding methyltransferase superfamily. MenG/UbiE family.

The enzyme catalyses a 2-demethylmenaquinol + S-adenosyl-L-methionine = a menaquinol + S-adenosyl-L-homocysteine + H(+). It participates in quinol/quinone metabolism; menaquinone biosynthesis; menaquinol from 1,4-dihydroxy-2-naphthoate: step 2/2. Functionally, methyltransferase required for the conversion of demethylmenaquinol (DMKH2) to menaquinol (MKH2). The protein is Demethylmenaquinone methyltransferase of Anoxybacillus flavithermus (strain DSM 21510 / WK1).